A 110-amino-acid chain; its full sequence is UPF0060 membrane protein PBPRB0495 (110 aa).

Helical transmembrane passes span 7–27 (VGLF…PYLW), 33–53 (TIWL…LLTL), 63–83 (AAYG…VDGI), and 85–105 (PTVW…IIMF).

It belongs to the UPF0060 family.

Its subcellular location is the cell inner membrane. The protein is UPF0060 membrane protein PBPRB0495 of Photobacterium profundum (strain SS9).